Reading from the N-terminus, the 224-residue chain is UPF0758 protein VV1_0825 (224 aa).

A disordered region spans residues 1 to 20; that stretch reads MSLKNLPSESMPREKLLQRG. The MPN domain maps to 102–224; the sequence is ALTSPQHTKL…VVSFAERGWI (123 aa). Positions 173, 175, and 186 each coordinate Zn(2+). The JAMM motif signature appears at 173 to 186; it reads HNHPSGVAEPSQAD.

The protein belongs to the UPF0758 family.

The protein is UPF0758 protein VV1_0825 of Vibrio vulnificus (strain CMCP6).